The chain runs to 161 residues: Large ribosomal subunit protein uL16 (161 aa).

The tract at residues 140-161 (LNKGNYKPAKTPVTADDSESSS) is disordered.

This sequence belongs to the universal ribosomal protein uL16 family. In terms of assembly, part of the 50S ribosomal subunit.

In terms of biological role, binds 23S rRNA and is also seen to make contacts with the A and possibly P site tRNAs. The chain is Large ribosomal subunit protein uL16 from Prochlorococcus marinus (strain NATL2A).